The sequence spans 125 residues: Fumarate reductase subunit D (125 aa).

The next 3 helical transmembrane spans lie at 30–50 (FAML…LGVI), 62–82 (AFAT…LPMW), and 105–125 (VACY…IFMI).

The protein belongs to the FrdD family. As to quaternary structure, part of an enzyme complex containing four subunits: a flavoprotein (FrdA), an iron-sulfur protein (FrdB), and two hydrophobic anchor proteins (FrdC and FrdD).

Its subcellular location is the cell inner membrane. Its function is as follows. Anchors the catalytic components of the fumarate reductase complex to the cell membrane, binds quinones. The polypeptide is Fumarate reductase subunit D (Vibrio parahaemolyticus serotype O3:K6 (strain RIMD 2210633)).